Consider the following 200-residue polypeptide: MKSLHTICLLFIFIARGNSRSCDYCHNIGKDCDGYEHECSSPEDVCGKVFLEISSASLSVRTVHKNCFSSSVCKLGHFDINIGHHSYIRGRINCCEKEPCEDQPFPGLPLSQPNGYYCPGALGLFTEDSTEYEAICKGTETKCINIVGHRHENYPGDISYNLKGCVSSCPLLSLSNSTHEENRNYLEKVECKDAFKIASH.

A signal peptide spans 1-19 (MKSLHTICLLFIFIARGNS). Disulfide bonds link Cys22-Cys46, Cys25-Cys32, Cys39-Cys67, Cys73-Cys94, Cys95-Cys100, Cys118-Cys143, Cys136-Cys165, and Cys169-Cys191. A glycan (N-linked (GlcNAc...) asparagine) is linked at Asn176.

This sequence belongs to the CNF-like-inhibitor family. As to quaternary structure, occurs as a mixture of oligomers. Tetrameric arrangement appears to be the predominant quaternary structure. In terms of tissue distribution, expressed by the liver.

The protein resides in the secreted. In terms of biological role, inhibits the enzymatic activity of phospholipase A2 (PA2). This chain is Phospholipase A2 inhibitor gamma subunit A, found in Gloydius brevicaudus siniticus (Chinese mamushi).